We begin with the raw amino-acid sequence, 205 residues long: Small ribosomal subunit protein uS4 (205 aa).

A disordered region spans residues 18–46 (NIWGRPKSPVNRREYGPGQHGQRRKGKLS). Residues 94–157 (RRLDTVVYRA…KQLAFVLEAS (64 aa)) form the S4 RNA-binding domain.

This sequence belongs to the universal ribosomal protein uS4 family. As to quaternary structure, part of the 30S ribosomal subunit. Contacts protein S5. The interaction surface between S4 and S5 is involved in control of translational fidelity.

Its function is as follows. One of the primary rRNA binding proteins, it binds directly to 16S rRNA where it nucleates assembly of the body of the 30S subunit. With S5 and S12 plays an important role in translational accuracy. This chain is Small ribosomal subunit protein uS4, found in Rhodopseudomonas palustris (strain HaA2).